A 405-amino-acid chain; its full sequence is Alpha-N-acetylgalactosaminidase (405 aa).

3 disulfide bridges follow: cysteine 21–cysteine 63, cysteine 25–cysteine 32, and cysteine 111–cysteine 142. Substrate-binding positions include 61–62 (DD) and lysine 138. Catalysis depends on aspartate 140, which acts as the Nucleophile. N-linked (GlcNAc...) asparagine glycosylation occurs at asparagine 161. Cysteine 171 and cysteine 193 are oxidised to a cystine. Substrate is bound at residue serine 172. A glycan (N-linked (GlcNAc...) asparagine) is linked at asparagine 185. Substrate is bound by residues arginine 197 and aspartate 201. The active-site Proton donor is the aspartate 201. N-linked (GlcNAc...) asparagine glycosylation occurs at asparagine 369.

This sequence belongs to the glycosyl hydrolase 27 family. As to quaternary structure, homodimer.

It is found in the lysosome. It carries out the reaction Cleavage of non-reducing alpha-(1-&gt;3)-N-acetylgalactosamine residues from human blood group A and AB mucin glycoproteins, Forssman hapten and blood group A lacto series glycolipids.. The catalysed reaction is a neolactoside IV(3)-alpha-GalNAc,IV(2)-alpha-Fuc-nLc4Cer(d18:1(4E)) + H2O = a neolactoside IV(2)-alpha-Fuc-nLc4Cer(d18:1(4E)) + N-acetyl-alpha-D-galactosamine. It catalyses the reaction a neolactoside IV(3)-alpha-GalNAc,IV(2)-alpha-Fuc-nLc4Cer(d18:0) + H2O = a neolactoside IV(2)-alpha-Fuc-nLc4Cer(d18:0) + N-acetyl-alpha-D-galactosamine. The enzyme catalyses a globoside IV3GalNAc-Gb4Cer + H2O = N-acetyl-alpha-D-galactosamine + a globoside Gb4Cer. Functionally, removes terminal alpha-N-acetylgalactosamine residues from glycolipids and glycopeptides. Required for the breakdown of glycolipids. The polypeptide is Alpha-N-acetylgalactosaminidase (NAGA) (Gallus gallus (Chicken)).